The following is a 350-amino-acid chain: Quercetin 2,3-dioxygenase (350 aa).

The segment at aspartate 1–aspartate 145 is cupin 1. Cu cation is bound by residues histidine 66, histidine 68, and glutamate 73. Histidine 66 contributes to the substrate binding site. Glutamate 73 contacts substrate. 2 N-linked (GlcNAc...) asparagine glycosylation sites follow: asparagine 90 and asparagine 109. Histidine 112 serves as a coordination point for Cu cation. N-linked (GlcNAc...) asparagine glycosylation is present at asparagine 142. The linker stretch occupies residues threonine 146 to asparagine 205. A disordered region spans residues histidine 148–serine 167. Positions isoleucine 152–serine 167 are enriched in low complexity. Asparagine 191 and asparagine 248 each carry an N-linked (GlcNAc...) asparagine glycan. The interval alanine 206–tryptophan 350 is cupin 2.

Homodimer. It depends on Cu cation as a cofactor. Post-translationally, the N-linked glycan at Asn-191 consists of Man(5)-GlcNAc(2).

The enzyme catalyses quercetin + O2 = 2-(3,4-dihydroxybenzoyloxy)-4,6-dihydroxybenzoate + CO. It participates in flavonoid metabolism; quercetin degradation. With respect to regulation, inhibited by diethyldithiocarbamate and kojic acid. Its function is as follows. Performs the first step in the degradation of the flavonoid quercetin by a dioxygenase reaction. The enzyme catalyzes the cleavage of the O-heteroaromatic ring of the flavonol quercetin yielding the depside 2-protocatechuoyl-phloroglucinol carboxylic acid and carbon monoxide. This involves the remarkable dioxygenolytic cleavage of two carbon-carbon bonds. The polypeptide is Quercetin 2,3-dioxygenase (Aspergillus japonicus).